The primary structure comprises 937 residues: Protein translocase subunit SecA (937 aa).

Residues Gln-86, 104 to 108 (GEGKT), and Asp-493 each bind ATP. Residues 868–889 (LERPSQPTKLAYSAPSEDGDAE) form a disordered region. Zn(2+) is bound by residues Cys-911, Cys-913, Cys-922, and His-923. Residues 915 to 937 (SGKKFKQCHGRPGGPTGLTARVS) form a disordered region.

Belongs to the SecA family. As to quaternary structure, monomer and homodimer. Part of the essential Sec protein translocation apparatus which comprises SecA, SecYEG and auxiliary proteins SecDF. Other proteins may also be involved. Zn(2+) serves as cofactor.

The protein resides in the cell membrane. The protein localises to the cytoplasm. It carries out the reaction ATP + H2O + cellular proteinSide 1 = ADP + phosphate + cellular proteinSide 2.. In terms of biological role, part of the Sec protein translocase complex. Interacts with the SecYEG preprotein conducting channel. Has a central role in coupling the hydrolysis of ATP to the transfer of proteins into and across the cell membrane, serving as an ATP-driven molecular motor driving the stepwise translocation of polypeptide chains across the membrane. The chain is Protein translocase subunit SecA from Nocardioides sp. (strain ATCC BAA-499 / JS614).